A 289-amino-acid chain; its full sequence is uncharacterized protein (289 aa).

A signal peptide spans Met-1–Gly-23. 4 N-linked (GlcNAc...) asparagine glycosylation sites follow: Asn-74, Asn-101, Asn-132, and Asn-285.

The protein localises to the secreted. This is an uncharacterized protein from Dictyostelium discoideum (Social amoeba).